Reading from the N-terminus, the 355-residue chain is Peptide chain release factor 1 (355 aa).

Position 231 is an N5-methylglutamine (Q231). The segment covering L283–S292 has biased composition (basic and acidic residues). A disordered region spans residues L283–Y306.

This sequence belongs to the prokaryotic/mitochondrial release factor family. Post-translationally, methylated by PrmC. Methylation increases the termination efficiency of RF1.

Its subcellular location is the cytoplasm. Peptide chain release factor 1 directs the termination of translation in response to the peptide chain termination codons UAG and UAA. The polypeptide is Peptide chain release factor 1 (Campylobacter concisus (strain 13826)).